We begin with the raw amino-acid sequence, 1649 residues long: eIF-2-alpha kinase GCN2 (1649 aa).

3 disordered regions span residues 1–25 (MAGG…RQDH), 138–158 (NKPP…QEEQ), and 227–256 (HGGS…YSVC). The region spanning 25-137 (HELQALEAIY…YHVQSFLSEH (113 aa)) is the RWD domain. A coiled-coil region spans residues 146-205 (HEEMLERRAQEEQQRLLEAKRKEEQEQREILHEIQRRKEEIKEEKKRKEMAKQERLEIAS). At serine 230 the chain carries Phosphoserine. The span at 237 to 249 (GKHRANSSGRSRR) shows a compositional bias: basic residues. Protein kinase domains lie at 296–539 (VYNA…HSFI) and 590–1001 (FEEL…SELL). ATP-binding positions include 596–604 (LGKGAFGAV) and lysine 619. Disordered stretches follow at residues 660–750 (ERPA…QSFL) and 766–788 (ENSK…ESEP). At threonine 667 the chain carries Phosphothreonine. Over residues 705–717 (LSSSVEWSTSGER) the composition is skewed to polar residues. The segment covering 731-740 (SDDEDDDEDE) has biased composition (acidic residues). Residues 778 to 787 (NEKNGCHESE) are compositionally biased toward basic and acidic residues. Aspartate 848 acts as the Proton acceptor in catalysis. Phosphothreonine is present on threonine 871. Threonine 899 and threonine 904 each carry phosphothreonine; by autocatalysis. The interval 1022-1493 (VDGKAYRTMM…DHVLQKLRTK (472 aa)) is histidyl-tRNA synthetase-like. The residue at position 1259 (lysine 1259) is an N6-acetyllysine.

It belongs to the protein kinase superfamily. Ser/Thr protein kinase family. GCN2 subfamily. As to quaternary structure, homodimer; homodimerization is important for kinase activation by uncharged tRNAs. Interacts with GCN1; this interaction stimulates EIF2AK4/GCN2 kinase activity and is impaired by IMPACT upon a variety of stress conditions, such as amino acid depletion, UV-C irradiation, proteasome inhibitor treatment and glucose deprivation. Interacts with DNAJC3; this interaction inhibits EIF2AK4/GCN2 kinase activity during endoplasmic reticulum (ER), hypothermic and amino acid-starving stress conditions. Interacts with MAP3K20; activates EIF2AK4/GCN2 kinase activity in response to moderate ribotoxic stress. (Microbial infection) Interacts with hepatitis E virus (HEV) ORF1 protease; this interaction inhibits dimerization of EIF2AK4 and prevents EIF2AK4-mediated phosphorylation of EIF2A. Autophosphorylated; autophosphorylation on Thr-899 is increased upon amino acid starvation and in UV irradiation cells and inhibited in presence of IMPACT. As to expression, widely expressed. Expressed in lung, smooth muscle cells and macrophages.

Its subcellular location is the cytoplasm. The enzyme catalyses L-seryl-[protein] + ATP = O-phospho-L-seryl-[protein] + ADP + H(+). It carries out the reaction L-threonyl-[protein] + ATP = O-phospho-L-threonyl-[protein] + ADP + H(+). Functionally, metabolic-stress sensing protein kinase that phosphorylates the alpha subunit of eukaryotic translation initiation factor 2 (EIF2S1/eIF-2-alpha) in response to low amino acid availability. Plays a role as an activator of the integrated stress response (ISR) required for adaptation to amino acid starvation. EIF2S1/eIF-2-alpha phosphorylation in response to stress converts EIF2S1/eIF-2-alpha into a global protein synthesis inhibitor, leading to a global attenuation of cap-dependent translation, and thus to a reduced overall utilization of amino acids, while concomitantly initiating the preferential translation of ISR-specific mRNAs, such as the transcriptional activator ATF4, and hence allowing ATF4-mediated reprogramming of amino acid biosynthetic gene expression to alleviate nutrient depletion. Binds uncharged tRNAs. Required for the translational induction of protein kinase PRKCH following amino acid starvation. Involved in cell cycle arrest by promoting cyclin D1 mRNA translation repression after the unfolded protein response pathway (UPR) activation or cell cycle inhibitor CDKN1A/p21 mRNA translation activation in response to amino acid deprivation. Plays a role in the consolidation of synaptic plasticity, learning as well as formation of long-term memory. Plays a role in neurite outgrowth inhibition. Plays a proapoptotic role in response to glucose deprivation. Promotes global cellular protein synthesis repression in response to UV irradiation independently of the stress-activated protein kinase/c-Jun N-terminal kinase (SAPK/JNK) and p38 MAPK signaling pathways. Plays a role in the antiviral response against alphavirus infection; impairs early viral mRNA translation of the incoming genomic virus RNA, thus preventing alphavirus replication. In terms of biological role, (Microbial infection) Plays a role in modulating the adaptive immune response to yellow fever virus infection; promotes dendritic cells to initiate autophagy and antigene presentation to both CD4(+) and CD8(+) T-cells under amino acid starvation. This Homo sapiens (Human) protein is eIF-2-alpha kinase GCN2.